The following is a 4749-amino-acid chain: E3 ubiquitin-protein ligase MYCBP2 (4749 aa).

Disordered stretches follow at residues 87–127 (DRDQ…RSKS), 170–192 (AASKNSVQSGESDSDEEEESREP), and 609–628 (ASKGEDGESTKSRRQSKPYK). Over residues 100–124 (SRNKKILNKKKLKRKQKSKSKVKTR) the composition is skewed to basic residues. 4 positions are modified to phosphoserine: Ser-127, Ser-178, Ser-181, and Ser-183. RCC1 repeat units follow at residues 600 to 655 (DGSV…VISK), 699 to 755 (NGEV…MMCP), 907 to 957 (KRDK…VLME), 958 to 1009 (NGDV…LLMD), and 1011 to 1066 (QVFT…LRID). Residues 899 to 910 (SHPAQLKHKRDK) are compositionally biased toward basic residues. A disordered region spans residues 899–928 (SHPAQLKHKRDKHKDGSGDRGEKDASKITT). Residues 911–924 (HKDGSGDRGEKDAS) are compositionally biased toward basic and acidic residues. The segment at 1235–1386 (NRFESHGGGW…GQIPQLLYRL (152 aa)) is PHR domain 1. A Phosphoserine modification is found at Ser-1621. A PHR domain 2 region spans residues 1723-1881 (NRFTKTSQGR…GQIPQILYYR (159 aa)). A disulfide bond links Cys-1745 and Cys-1860. The interval 2018 to 2544 (AVIESEHPYK…FNQHLGKSLL (527 aa)) is RAE1 binding. Disordered stretches follow at residues 2313–2336 (KKTSLQQDQGKKCQRIPGSPSAAA) and 2780–3084 (QQRQ…KGDG). The Filamin repeat unit spans residues 2331 to 2438 (SPSAAASSAD…IDAGLEVKVK (108 aa)). Residues 2780–2803 (QQRQLQSDRGTISTSSRPVSTSGK) show a composition bias toward polar residues. Residues 2814–2832 (VKPDGHVSRTPADQKKPRG) show a composition bias toward basic and acidic residues. Ser-2841 carries the phosphoserine modification. Residues 2847-2857 (DAAKLRSDSHS) are compositionally biased toward basic and acidic residues. Positions 2858 to 2879 (RSLSPNHNTLQTLKSDGRTSSG) are enriched in polar residues. Ser-2859 and Ser-2861 each carry phosphoserine. Composition is skewed to low complexity over residues 2884 to 2894 (SPGPGSRSSSP) and 2904 to 2917 (SSPSGASSPRSSSP). Phosphoserine is present on residues Ser-2905 and Ser-2911. Positions 2918–2929 (QDKNLPQKSTAP) are enriched in polar residues. Over residues 2932 to 2943 (TKLDPPRERSKS) the composition is skewed to basic and acidic residues. Ser-2941, Ser-2943, and Ser-2992 each carry phosphoserine. Over residues 3008-3021 (CTSSTLKTNGVTDS) the composition is skewed to polar residues. 2 stretches are compositionally biased toward basic and acidic residues: residues 3027–3037 (GDLKSVDEGSN) and 3047–3056 (PLKDEQEMRA). Phosphoserine is present on Ser-3057. Positions 3060 to 3073 (ISRKCANRHTRPKK) are enriched in basic residues. 3 positions are modified to phosphoserine: Ser-3162, Ser-3550, and Ser-3577. The tract at residues 3677 to 3700 (VEAEEDEDEDNKSNKENAEQEKDT) is disordered. Basic and acidic residues predominate over residues 3687 to 3700 (NKSNKENAEQEKDT). The DOC domain maps to 3789–3967 (FSISVQSGFE…SVAQQRSCEA (179 aa)). The segment at 3986-4007 (SGDAEPTPEQEEKALLSSPEGE) is disordered. The residue at position 3992 (Thr-3992) is a Phosphothreonine. Ser-4002 and Ser-4003 each carry phosphoserine. Residues Cys-4499, Cys-4502, Cys-4517, His-4519, His-4522, Cys-4525, Cys-4546, Cys-4549, Cys-4615, and Cys-4618 each coordinate Zn(2+). The RING-type; atypical zinc-finger motif lies at 4499–4550 (CMICFTEALSAAPAIQLDCSHVFHLQCCRRVLENRWLGPRITFGFISCPICK). Residues 4610 to 4747 (YAYYVCYKCR…LGCGVCRNAH (138 aa)) form a tandem cysteine domain region. Residue Cys-4629 is part of the active site. Zn(2+) contacts are provided by Cys-4646, Cys-4649, Cys-4658, His-4661, Cys-4670, Cys-4673, and Cys-4674. Residue Cys-4681 is part of the active site. Zn(2+) is bound by residues Cys-4688, Cys-4691, Cys-4709, Cys-4723, His-4729, Cys-4740, and Cys-4743.

The protein belongs to the RING-Cys relay (RCR) family. Interacts with MYC. Interacts with TSC2 (tuberin) when TSC2 is in complex with TSC1 (hamartin). Interacts with FBXO45. Interacts with RAE1. Interacts with CPNE1 (via VWFA domain) and CPNE4 (via VWFA domain). Interacts with (sumoylated) RANGAP1; interaction with sumoylated RANGAP1 inhibits E3 ubiquitin-protein ligase activity and promotes MYCBP2 translocation to the nucleus. Interacts with RAN. Interacts with ATP13A2; the interaction inhibits the ubiquitination of TSC2 by MYCBP2. Interacts with USP11. Autoubiquitinated. As to expression, expression is mostly restricted to the nervous system, including expression in motor and sensory axons. During postnatal development, expression is particularly strong in the cerebellum, hippocampus and retina. Lower levels of expression are observed throughout the cerebral cortex.

The protein localises to the nucleus. It is found in the cell projection. It localises to the axon. The protein resides in the cytoplasm. Its subcellular location is the cytoskeleton. The enzyme catalyses [E2 ubiquitin-conjugating enzyme]-S-ubiquitinyl-L-cysteine + [acceptor protein]-L-threonine = [E2 ubiquitin-conjugating enzyme]-L-cysteine + [acceptor protein]-3-O-ubiquitinyl-L-threonine.. It participates in protein modification; protein ubiquitination. Atypical E3 ubiquitin-protein ligase which specifically mediates ubiquitination of threonine and serine residues on target proteins, instead of ubiquitinating lysine residues. Shows esterification activity towards both threonine and serine, with a preference for threonine, and acts via two essential catalytic cysteine residues that relay ubiquitin to its substrate via thioester intermediates. Interacts with the E2 enzymes UBE2D1, UBE2D3, UBE2E1 and UBE2L3. Plays a key role in neural development, probably by mediating ubiquitination of threonine residues on target proteins. Involved in different processes such as regulation of neurite outgrowth, synaptic growth, synaptogenesis and axon degeneration. Required for the formation of major central nervous system axon tracts. Required for proper axon growth by regulating axon navigation and axon branching: acts by regulating the subcellular location and stability of MAP3K12/DLK. Required for proper localization of retinogeniculate projections but not for eye-specific segregation. Regulates axon guidance in the olfactory system. Involved in Wallerian axon degeneration, an evolutionarily conserved process that drives the loss of damaged axons: acts by promoting destabilization of NMNAT2, probably via ubiquitination of NMNAT2. Catalyzes ubiquitination of threonine and/or serine residues on NMNAT2, consequences of threonine and/or serine ubiquitination are however unknown. Regulates the internalization of TRPV1 in peripheral sensory neurons. May mediate ubiquitination and subsequent proteasomal degradation of TSC2/tuberin. Independently of the E3 ubiquitin-protein ligase activity, also acts as a guanosine exchange factor (GEF) for RAN in neurons of dorsal root ganglia. May function as a facilitator or regulator of transcriptional activation by MYC. Acts in concert with HUWE1 to regulate the circadian clock gene expression by promoting the lithium-induced ubiquination and degradation of NR1D1. This Mus musculus (Mouse) protein is E3 ubiquitin-protein ligase MYCBP2.